A 171-amino-acid chain; its full sequence is S-ribosylhomocysteine lyase (171 aa).

Fe cation contacts are provided by His-54, His-58, and Cys-128.

The protein belongs to the LuxS family. Homodimer. It depends on Fe cation as a cofactor.

The enzyme catalyses S-(5-deoxy-D-ribos-5-yl)-L-homocysteine = (S)-4,5-dihydroxypentane-2,3-dione + L-homocysteine. In terms of biological role, involved in the synthesis of autoinducer 2 (AI-2) which is secreted by bacteria and is used to communicate both the cell density and the metabolic potential of the environment. The regulation of gene expression in response to changes in cell density is called quorum sensing. Catalyzes the transformation of S-ribosylhomocysteine (RHC) to homocysteine (HC) and 4,5-dihydroxy-2,3-pentadione (DPD). The polypeptide is S-ribosylhomocysteine lyase (Cronobacter sakazakii (strain ATCC BAA-894) (Enterobacter sakazakii)).